Consider the following 529-residue polypeptide: Peptide chain release factor 3 (529 aa).

Positions 11 to 279 (AKRRTFAIIS…GLVDWAPKPQ (269 aa)) constitute a tr-type G domain. Residues 20-27 (SHPDAGKT), 88-92 (DTPGH), and 142-145 (NKLD) each bind GTP.

The protein belongs to the TRAFAC class translation factor GTPase superfamily. Classic translation factor GTPase family. PrfC subfamily.

The protein localises to the cytoplasm. Its function is as follows. Increases the formation of ribosomal termination complexes and stimulates activities of RF-1 and RF-2. It binds guanine nucleotides and has strong preference for UGA stop codons. It may interact directly with the ribosome. The stimulation of RF-1 and RF-2 is significantly reduced by GTP and GDP, but not by GMP. The protein is Peptide chain release factor 3 of Idiomarina loihiensis (strain ATCC BAA-735 / DSM 15497 / L2-TR).